The sequence spans 759 residues: Subtilisin-like protease SBT3.16 (759 aa).

Residues 1-33 (MELSSLIVPNNKKHFVVVFIGLVLIFKIALITA) form the signal peptide. Residues 34-119 (ANEKSQIYTV…VTRSKNMKLK (86 aa)) constitute a propeptide, activation peptide. An Inhibitor I9 domain is found at 41–118 (YTVHLGERQH…RVTRSKNMKL (78 aa)). Positions 124–608 (SDYLGLTSAA…GGLVNPVKVA (485 aa)) constitute a Peptidase S8 domain. The active-site Charge relay system is Asp153. Asn186 and Asn209 each carry an N-linked (GlcNAc...) asparagine glycan. Catalysis depends on His229, which acts as the Charge relay system. A glycan (N-linked (GlcNAc...) asparagine) is linked at Asn371. The active-site Charge relay system is Ser539. N-linked (GlcNAc...) asparagine glycosylation is found at Asn632 and Asn711.

It belongs to the peptidase S8 family.

It is found in the secreted. This chain is Subtilisin-like protease SBT3.16, found in Arabidopsis thaliana (Mouse-ear cress).